A 399-amino-acid polypeptide reads, in one-letter code: Phosphoglycerate kinase (399 aa).

Substrate-binding positions include 22–24 (DFN), arginine 38, 61–64 (HLGR), arginine 120, and arginine 153. ATP contacts are provided by residues lysine 204, glutamate 326, and 352 to 355 (GGDT).

Belongs to the phosphoglycerate kinase family. In terms of assembly, monomer.

It localises to the cytoplasm. The catalysed reaction is (2R)-3-phosphoglycerate + ATP = (2R)-3-phospho-glyceroyl phosphate + ADP. The protein operates within carbohydrate degradation; glycolysis; pyruvate from D-glyceraldehyde 3-phosphate: step 2/5. The sequence is that of Phosphoglycerate kinase from Citrifermentans bemidjiense (strain ATCC BAA-1014 / DSM 16622 / JCM 12645 / Bem) (Geobacter bemidjiensis).